Here is a 250-residue protein sequence, read N- to C-terminus: Probable transcriptional regulatory protein Mkms_2298 (250 aa).

Belongs to the TACO1 family.

The protein resides in the cytoplasm. This Mycobacterium sp. (strain KMS) protein is Probable transcriptional regulatory protein Mkms_2298.